The sequence spans 244 residues: ATP synthase subunit a (244 aa).

A run of 7 helical transmembrane segments spans residues 20-40 (FFDI…VIVI), 81-101 (GILF…LNVM), 113-133 (QLLV…IWGF), 140-160 (FLNI…LVFI), 176-196 (LFAN…AAIY), 202-222 (FIGI…LGIA), and 223-243 (FLQA…IINL).

Belongs to the ATPase A chain family. As to quaternary structure, F-type ATPases have 2 components, CF(1) - the catalytic core - and CF(0) - the membrane proton channel. CF(1) has five subunits: alpha(3), beta(3), gamma(1), delta(1), epsilon(1). CF(0) has three main subunits: a, b and c.

The protein localises to the mitochondrion inner membrane. Mitochondrial membrane ATP synthase (F(1)F(0) ATP synthase or Complex V) produces ATP from ADP in the presence of a proton gradient across the membrane which is generated by electron transport complexes of the respiratory chain. F-type ATPases consist of two structural domains, F(1) - containing the extramembraneous catalytic core and F(0) - containing the membrane proton channel, linked together by a central stalk and a peripheral stalk. During catalysis, ATP synthesis in the catalytic domain of F(1) is coupled via a rotary mechanism of the central stalk subunits to proton translocation. Key component of the proton channel; it may play a direct role in the translocation of protons across the membrane. The polypeptide is ATP synthase subunit a (atp6) (Dictyostelium discoideum (Social amoeba)).